The chain runs to 484 residues: RxLR effector protein PexRD18 (484 aa).

The N-terminal stretch at 1–20 (MSHQRILLLLMAAFFAWVSA) is a signal peptide. The RxLR-dEER signature appears at 55–79 (RFLRLYDAEVRDTVRGDNDVDREER).

The protein belongs to the RxLR effector family.

The protein localises to the secreted. It is found in the host cell membrane. In terms of biological role, effector that enhances P.infestans colonization of Nicotiana benthamiana leaves. In Phytophthora infestans (strain T30-4) (Potato late blight agent), this protein is RxLR effector protein PexRD18.